Reading from the N-terminus, the 437-residue chain is MTDLTPREIVSELDRFIIGQKDAKRAVAVALRNRWRRKQLSDDLREEVYPKNILMIGPTGVGKTEISRRLAKLARAPFIKVEATKFTEVGYVGRDVEQIIRDLVENAITMTRDHMREEVKANAHQAAEERVIEAIAGSDAREATREMFRKKLKAGELDDTVIELEVADTSNPMSMFEIPGQPGMNPMGGGMDLVELFGKAFGGRTVRKKLTVAQSYEVLISEEADKLLDDEAVNRSAVTAVEQNGIVFLDEIDKVCARSDARGADVSREGVQRDLLPLIEGTTVSTKYGPVKTDHVLFIASGAFHIAKPSDLLPELQGRLPIRVELRPLTEQDFVRILTETDNALTLQYTALMGTESVTVTFAEDGIAALARIAAEVNQSVENIGARRLYTVMERVFEELSFAAPDRSGDEITVDAEFVEANLGALTRDTDLSRYVL.

ATP contacts are provided by residues Ile18, 60–65 (GVGKTE), Asp250, Glu315, and Arg387.

Belongs to the ClpX chaperone family. HslU subfamily. As to quaternary structure, a double ring-shaped homohexamer of HslV is capped on each side by a ring-shaped HslU homohexamer. The assembly of the HslU/HslV complex is dependent on binding of ATP.

The protein resides in the cytoplasm. Functionally, ATPase subunit of a proteasome-like degradation complex; this subunit has chaperone activity. The binding of ATP and its subsequent hydrolysis by HslU are essential for unfolding of protein substrates subsequently hydrolyzed by HslV. HslU recognizes the N-terminal part of its protein substrates and unfolds these before they are guided to HslV for hydrolysis. This is ATP-dependent protease ATPase subunit HslU from Dinoroseobacter shibae (strain DSM 16493 / NCIMB 14021 / DFL 12).